A 299-amino-acid polypeptide reads, in one-letter code: Probable xyloglucan endotransglucosylase/hydrolase protein 10 (299 aa).

Positions 1 to 29 (MTLINRSKPFVLLVGFSIISSLLLWVSQA) are cleaved as a signal peptide. A GH16 domain is found at 30 to 225 (SVVSSGDFNK…WSKGPFVASF (196 aa)). N-linked (GlcNAc...) asparagine glycosylation occurs at asparagine 51. Glutamate 111 (nucleophile) is an active-site residue. The active-site Proton donor is the glutamate 115. Xyloglucan contacts are provided by residues glutamate 115, 128–130 (QTN), 138–140 (NRE), 204–205 (SW), and glycine 209. 2 cysteine pairs are disulfide-bonded: cysteine 233/cysteine 242 and cysteine 280/cysteine 294. The N-linked (GlcNAc...) asparagine glycan is linked to asparagine 238. Arginine 285 is a binding site for xyloglucan.

It belongs to the glycosyl hydrolase 16 family. XTH group 1 subfamily. In terms of processing, contains at least one intrachain disulfide bond essential for its enzymatic activity.

Its subcellular location is the secreted. The protein localises to the cell wall. It is found in the extracellular space. It localises to the apoplast. The enzyme catalyses breaks a beta-(1-&gt;4) bond in the backbone of a xyloglucan and transfers the xyloglucanyl segment on to O-4 of the non-reducing terminal glucose residue of an acceptor, which can be a xyloglucan or an oligosaccharide of xyloglucan.. Functionally, catalyzes xyloglucan endohydrolysis (XEH) and/or endotransglycosylation (XET). Cleaves and religates xyloglucan polymers, an essential constituent of the primary cell wall, and thereby participates in cell wall construction of growing tissues. This Arabidopsis thaliana (Mouse-ear cress) protein is Probable xyloglucan endotransglucosylase/hydrolase protein 10 (XTH10).